The following is a 345-amino-acid chain: Methionine import ATP-binding protein MetN (345 aa).

Residues 2-241 (IKLKNISKIF…PKTELAQEFI (240 aa)) enclose the ABC transporter domain. Residue 38-45 (GASGAGKS) coordinates ATP.

It belongs to the ABC transporter superfamily. Methionine importer (TC 3.A.1.24) family. The complex is composed of two ATP-binding proteins (MetN), two transmembrane proteins (MetI) and a solute-binding protein (MetQ).

Its subcellular location is the cell inner membrane. The catalysed reaction is L-methionine(out) + ATP + H2O = L-methionine(in) + ADP + phosphate + H(+). It catalyses the reaction D-methionine(out) + ATP + H2O = D-methionine(in) + ADP + phosphate + H(+). Part of the ABC transporter complex MetNIQ involved in methionine import. Responsible for energy coupling to the transport system. The chain is Methionine import ATP-binding protein MetN from Mannheimia succiniciproducens (strain KCTC 0769BP / MBEL55E).